The following is a 129-amino-acid chain: Small ribosomal subunit protein uS11 (129 aa).

It belongs to the universal ribosomal protein uS11 family. In terms of assembly, part of the 30S ribosomal subunit. Interacts with proteins S7 and S18. Binds to IF-3.

Its function is as follows. Located on the platform of the 30S subunit, it bridges several disparate RNA helices of the 16S rRNA. Forms part of the Shine-Dalgarno cleft in the 70S ribosome. This chain is Small ribosomal subunit protein uS11, found in Hyphomonas neptunium (strain ATCC 15444).